Here is a 98-residue protein sequence, read N- to C-terminus: La1-like protein 13 (98 aa).

The first 24 residues, 1–24 (MERILKPVFLAILIVLSFSSQCMG), serve as a signal peptide directing secretion. Lys-97 carries the post-translational modification Lysine amide.

This sequence belongs to the scorpion La1-like peptide family. In terms of processing, contains 4 disulfide bonds. Expressed by the venom gland.

The protein resides in the secreted. The polypeptide is La1-like protein 13 (Urodacus yaschenkoi (Inland robust scorpion)).